Consider the following 193-residue polypeptide: Peptide deformylase (193 aa).

Positions 111 and 155 each coordinate Fe cation. The active site involves Glu156. His159 is a binding site for Fe cation.

It belongs to the polypeptide deformylase family. The cofactor is Fe(2+).

It carries out the reaction N-terminal N-formyl-L-methionyl-[peptide] + H2O = N-terminal L-methionyl-[peptide] + formate. Removes the formyl group from the N-terminal Met of newly synthesized proteins. Requires at least a dipeptide for an efficient rate of reaction. N-terminal L-methionine is a prerequisite for activity but the enzyme has broad specificity at other positions. The sequence is that of Peptide deformylase from Mycoplasma genitalium (strain ATCC 33530 / DSM 19775 / NCTC 10195 / G37) (Mycoplasmoides genitalium).